The following is a 198-amino-acid chain: MATMSALQSSFTSLSLSPSSSFLGQRLISPISLSVTSPVKPAENPCLVLAKLKRWERKECKPNSLPILHKMHVKFGDTVKVISGRDKGKIGEVTKIFTHNSTIVIKDVNLKTKHMKSREEGEPGQIVKIEAPIHSSNVMLYSKEKDVVSRVGHKVLEDGQKVRYLIKTGELIDTIEKWKLLKEAKDKETTQVAVTSAS.

The transit peptide at Met1 to Ala50 directs the protein to the chloroplast.

Belongs to the universal ribosomal protein uL24 family. Part of the 50S ribosomal subunit.

Its subcellular location is the plastid. The protein localises to the chloroplast. Functionally, one of two assembly initiator proteins, it binds directly to the 5'-end of the 23S rRNA, where it nucleates assembly of the 50S subunit. Required for optimal plastid performance in terms of photosynthesis and growth. Required for the translation of plastid mRNAs. Plays a critical role in biosynthesis of thylakoid membrane proteins encoded by chloroplast genes. This chain is Large ribosomal subunit protein uL24c (RPL24), found in Arabidopsis thaliana (Mouse-ear cress).